The primary structure comprises 387 residues: N-acetyldiaminopimelate deacetylase (387 aa).

Aspartate 75 is a catalytic residue. Glutamate 134 serves as the catalytic Proton acceptor.

It belongs to the peptidase M20A family. N-acetyldiaminopimelate deacetylase subfamily.

The catalysed reaction is N-acetyl-(2S,6S)-2,6-diaminopimelate + H2O = (2S,6S)-2,6-diaminopimelate + acetate. It participates in amino-acid biosynthesis; L-lysine biosynthesis via DAP pathway; LL-2,6-diaminopimelate from (S)-tetrahydrodipicolinate (acetylase route): step 3/3. Catalyzes the conversion of N-acetyl-diaminopimelate to diaminopimelate and acetate. The chain is N-acetyldiaminopimelate deacetylase from Leuconostoc citreum (strain KM20).